The chain runs to 196 residues: Pentatricopeptide repeat-containing protein At1g62350 (196 aa).

PPR repeat units lie at residues 70–104 and 105–139; these read DMFFYRDMLMMLARNKKVDETKKVWEDLKKEEVLF and DQHTFGDLVRGFLDNELPLEAMRLYGEMRESPDRP.

The protein belongs to the PPR family. P subfamily.

The protein is Pentatricopeptide repeat-containing protein At1g62350 of Arabidopsis thaliana (Mouse-ear cress).